A 406-amino-acid polypeptide reads, in one-letter code: Succinylornithine transaminase (406 aa).

Lys-252 carries the post-translational modification N6-(pyridoxal phosphate)lysine.

This sequence belongs to the class-III pyridoxal-phosphate-dependent aminotransferase family. AstC subfamily. Pyridoxal 5'-phosphate serves as cofactor.

It catalyses the reaction N(2)-succinyl-L-ornithine + 2-oxoglutarate = N-succinyl-L-glutamate 5-semialdehyde + L-glutamate. It participates in amino-acid degradation; L-arginine degradation via AST pathway; L-glutamate and succinate from L-arginine: step 3/5. Functionally, catalyzes the transamination of N(2)-succinylornithine and alpha-ketoglutarate into N(2)-succinylglutamate semialdehyde and glutamate. Can also act as an acetylornithine aminotransferase. This chain is Succinylornithine transaminase, found in Escherichia coli (strain 55989 / EAEC).